An 808-amino-acid chain; its full sequence is LisH domain-containing protein ARMC9 (808 aa).

In terms of domain architecture, LisH spans 7-39 (YEADLLGLVKEFLNFGEFQETLETFTKECKTKG). The stretch at 196–230 (ITLYKESLHNNQELLQQLQQQLMETEHKARTYKKC) forms a coiled coil. Disordered stretches follow at residues 576–599 (FDESIESDDEEEEKDDEEDEDALE), 650–709 (PLQR…DYCV), and 742–808 (GMEK…SYRK). Residues 579–599 (SIESDDEEEEKDDEEDEDALE) show a composition bias toward acidic residues. 3 stretches are compositionally biased toward polar residues: residues 655–668 (VTPSTHRVMNTVRK), 677–709 (TNTFKTSQANMSVVSSRPPTRSGSRASTSDYCV), and 775–784 (IAPQFSQSGP). Positions 785-808 (QQTSYSSSAGSSTRSRQSTQSYRK) are enriched in low complexity.

The protein localises to the cytoplasm. The protein resides in the cytoskeleton. Its subcellular location is the cilium basal body. It localises to the cell projection. It is found in the cilium. The protein localises to the microtubule organizing center. The protein resides in the centrosome. Its subcellular location is the centriole. Involved in ciliogenesis. It is required for appropriate acetylation and polyglutamylation of ciliary microtubules, and regulation of cilium length. Acts as a positive regulator of hedgehog (Hh)signaling. The chain is LisH domain-containing protein ARMC9 (armc9) from Xenopus tropicalis (Western clawed frog).